Consider the following 305-residue polypeptide: Probable 5-dehydro-4-deoxyglucarate dehydratase (305 aa).

This sequence belongs to the DapA family.

It catalyses the reaction 5-dehydro-4-deoxy-D-glucarate + H(+) = 2,5-dioxopentanoate + CO2 + H2O. It functions in the pathway carbohydrate acid metabolism; D-glucarate degradation; 2,5-dioxopentanoate from D-glucarate: step 2/2. This chain is Probable 5-dehydro-4-deoxyglucarate dehydratase, found in Pseudomonas entomophila (strain L48).